The following is a 1188-amino-acid chain: uncharacterized protein (1188 aa).

4 disordered regions span residues 126-468 (GDLR…SQME), 484-771 (EDRF…LYKP), 790-823 (ARGG…TDEL), and 847-1039 (QRAQ…FSRF). 3 stretches are compositionally biased toward pro residues: residues 139 to 151 (IPPP…PGPP), 159 to 193 (GGSP…PPPV), and 208 to 240 (IPTP…PAPA). Serine 260 bears the Phosphoserine mark. The span at 322–331 (EAPRKEEGAT) shows a compositional bias: basic and acidic residues. Residues 389–418 (TPPPAPPLPPPAPPLPPPAPPLPPAAPPLP) are compositionally biased toward pro residues. Residues 432–441 (KTPKSSSPAL) show a composition bias toward low complexity. Basic and acidic residues-rich tracts occupy residues 501-514 (KEGK…EKET) and 566-583 (IRNE…KEAK). Residues 618-633 (LPPQSTTLLPTTSLQP) show a composition bias toward low complexity. Residues 640–652 (AIPPKATPEPAIP) show a composition bias toward pro residues. Position 666 is a phosphothreonine (threonine 666). Positions 689 to 703 (PAIASTATTLPTTTS) are enriched in low complexity. The span at 875–893 (AEASSDSIFHSQGTPNSFT) shows a compositional bias: polar residues. Positions 920 to 931 (LGRDAEGTELSR) are enriched in basic and acidic residues. Residues 986 to 1001 (IPPPPEFSNDPEPPAP) are compositionally biased toward pro residues. Residues 1007 to 1019 (GRQSSPPRNNYSD) are compositionally biased toward polar residues. Over residues 1026–1035 (AGPGAPPALG) the composition is skewed to low complexity. Arginine 1044 carries the asymmetric dimethylarginine modification. Residues 1069 to 1160 (GEPHRGPGLP…SPYTTTRYGS (92 aa)) are disordered. Residues arginine 1073 and arginine 1084 each carry the omega-N-methylarginine modification. Arginine 1157 is modified (asymmetric dimethylarginine).

This is an uncharacterized protein from Homo sapiens (Human).